The primary structure comprises 197 residues: Phosphoheptose isomerase (197 aa).

In terms of domain architecture, SIS spans 34 to 196 (MVQCLLGGNK…DRTLFPQDEQ (163 aa)). A substrate-binding site is contributed by 49 to 51 (NGG). 2 residues coordinate Zn(2+): H58 and E62. Substrate contacts are provided by residues E62, 91 to 92 (ND), 117 to 119 (STS), S122, and Q172. The Zn(2+) site is built by Q172 and H180.

The protein belongs to the SIS family. GmhA subfamily. In terms of assembly, homotetramer. Zn(2+) serves as cofactor.

Its subcellular location is the cytoplasm. The enzyme catalyses 2 D-sedoheptulose 7-phosphate = D-glycero-alpha-D-manno-heptose 7-phosphate + D-glycero-beta-D-manno-heptose 7-phosphate. It functions in the pathway carbohydrate biosynthesis; D-glycero-D-manno-heptose 7-phosphate biosynthesis; D-glycero-alpha-D-manno-heptose 7-phosphate and D-glycero-beta-D-manno-heptose 7-phosphate from sedoheptulose 7-phosphate: step 1/1. Catalyzes the isomerization of sedoheptulose 7-phosphate in D-glycero-D-manno-heptose 7-phosphate. This Shewanella oneidensis (strain ATCC 700550 / JCM 31522 / CIP 106686 / LMG 19005 / NCIMB 14063 / MR-1) protein is Phosphoheptose isomerase.